The following is a 346-amino-acid chain: Holliday junction branch migration complex subunit RuvB (346 aa).

Positions 1–182 are large ATPase domain (RuvB-L); the sequence is MKIELLNTPA…FGISSRFDYY (182 aa). ATP contacts are provided by residues Ile21, Arg22, Gly63, Lys66, Thr67, Thr68, 129-131, Arg172, Tyr182, and Arg219; that span reads EDF. Residue Thr67 coordinates Mg(2+). The segment at 183 to 253 is small ATPAse domain (RuvB-S); the sequence is PPELLERIIL…IAMTTLASLE (71 aa). The head domain (RuvB-H) stretch occupies residues 256 to 346; that stretch reads EEGLDDMDKK…GPLFDAAPAR (91 aa). Residues Arg311 and Arg316 each coordinate DNA.

The protein belongs to the RuvB family. Homohexamer. Forms an RuvA(8)-RuvB(12)-Holliday junction (HJ) complex. HJ DNA is sandwiched between 2 RuvA tetramers; dsDNA enters through RuvA and exits via RuvB. An RuvB hexamer assembles on each DNA strand where it exits the tetramer. Each RuvB hexamer is contacted by two RuvA subunits (via domain III) on 2 adjacent RuvB subunits; this complex drives branch migration. In the full resolvosome a probable DNA-RuvA(4)-RuvB(12)-RuvC(2) complex forms which resolves the HJ.

Its subcellular location is the cytoplasm. It catalyses the reaction ATP + H2O = ADP + phosphate + H(+). Functionally, the RuvA-RuvB-RuvC complex processes Holliday junction (HJ) DNA during genetic recombination and DNA repair, while the RuvA-RuvB complex plays an important role in the rescue of blocked DNA replication forks via replication fork reversal (RFR). RuvA specifically binds to HJ cruciform DNA, conferring on it an open structure. The RuvB hexamer acts as an ATP-dependent pump, pulling dsDNA into and through the RuvAB complex. RuvB forms 2 homohexamers on either side of HJ DNA bound by 1 or 2 RuvA tetramers; 4 subunits per hexamer contact DNA at a time. Coordinated motions by a converter formed by DNA-disengaged RuvB subunits stimulates ATP hydrolysis and nucleotide exchange. Immobilization of the converter enables RuvB to convert the ATP-contained energy into a lever motion, pulling 2 nucleotides of DNA out of the RuvA tetramer per ATP hydrolyzed, thus driving DNA branch migration. The RuvB motors rotate together with the DNA substrate, which together with the progressing nucleotide cycle form the mechanistic basis for DNA recombination by continuous HJ branch migration. Branch migration allows RuvC to scan DNA until it finds its consensus sequence, where it cleaves and resolves cruciform DNA. This is Holliday junction branch migration complex subunit RuvB from Chlorobium phaeobacteroides (strain DSM 266 / SMG 266 / 2430).